A 264-amino-acid polypeptide reads, in one-letter code: Granzyme K (264 aa).

The first 24 residues, 1–24 (MTKFSSFSLFFLIVGAYMTHVCFN), serve as a signal peptide directing secretion. A propeptide spans 25-26 (ME) (activation peptide). Positions 27 to 259 (IIGGKEVSPH…YQTWIKSNLV (233 aa)) constitute a Peptidase S1 domain. C52 and C68 form a disulfide bridge. Residues H67 and D116 each act as charge relay system in the active site. Disulfide bonds link C149–C220, C181–C199, and C210–C234. Catalysis depends on S214, which acts as the Charge relay system.

This sequence belongs to the peptidase S1 family. Granzyme subfamily. As to expression, expressed in lung, spleen, thymus and peripheral blood leukocytes.

It localises to the secreted. The protein resides in the cytoplasmic granule. In Homo sapiens (Human), this protein is Granzyme K (GZMK).